We begin with the raw amino-acid sequence, 218 residues long: Stress response regulator protein 1 (218 aa).

The Response regulatory domain occupies 90–209 (RFLLVDDNSI…YRVVLDVVDN (120 aa)). A 4-aspartylphosphate modification is found at Asp-142.

Required for stress adaptation, morphogenesis and virulence. This is Stress response regulator protein 1 (SRR1) from Meyerozyma guilliermondii (strain ATCC 6260 / CBS 566 / DSM 6381 / JCM 1539 / NBRC 10279 / NRRL Y-324) (Yeast).